A 150-amino-acid chain; its full sequence is Large ribosomal subunit protein bL9 (150 aa).

It belongs to the bacterial ribosomal protein bL9 family.

In terms of biological role, binds to the 23S rRNA. In Latilactobacillus sakei subsp. sakei (strain 23K) (Lactobacillus sakei subsp. sakei), this protein is Large ribosomal subunit protein bL9.